Here is a 301-residue protein sequence, read N- to C-terminus: Sulfate adenylyltransferase subunit 2 (301 aa).

This sequence belongs to the PAPS reductase family. CysD subfamily. As to quaternary structure, heterodimer composed of CysD, the smaller subunit, and CysN.

The enzyme catalyses sulfate + ATP + H(+) = adenosine 5'-phosphosulfate + diphosphate. It functions in the pathway sulfur metabolism; hydrogen sulfide biosynthesis; sulfite from sulfate: step 1/3. In terms of biological role, with CysN forms the ATP sulfurylase (ATPS) that catalyzes the adenylation of sulfate producing adenosine 5'-phosphosulfate (APS) and diphosphate, the first enzymatic step in sulfur assimilation pathway. APS synthesis involves the formation of a high-energy phosphoric-sulfuric acid anhydride bond driven by GTP hydrolysis by CysN coupled to ATP hydrolysis by CysD. The chain is Sulfate adenylyltransferase subunit 2 from Geotalea daltonii (strain DSM 22248 / JCM 15807 / FRC-32) (Geobacter daltonii).